Reading from the N-terminus, the 439-residue chain is AP-2 complex subunit mu (439 aa).

Residues 172–438 form the MHD domain; the sequence is RNELYIDVVE…LTKAGTYQNR (267 aa).

Belongs to the adaptor complexes medium subunit family. As to quaternary structure, adaptor protein complex 2 (AP-2) is a heterotetramer composed of two large adaptins (alpha-type and beta-type subunits), a medium adaptin (mu-type subunit AP50) and a small adaptin (sigma-type subunit AP17). Phosphorylated.

It localises to the cell membrane. The protein localises to the membrane. Its subcellular location is the coated pit. Functionally, component of the adaptor complexes which link clathrin to receptors in coated vesicles. Clathrin-associated protein complexes are believed to interact with the cytoplasmic tails of membrane proteins, leading to their selection and concentration. AP50 is a subunit of the plasma membrane adaptor. The chain is AP-2 complex subunit mu (apm2) from Dictyostelium discoideum (Social amoeba).